We begin with the raw amino-acid sequence, 624 residues long: Chaperone protein HtpG (624 aa).

Residues 1 to 341 (MAVKQFKAES…SPDLSLNISR (341 aa)) are a; substrate-binding. Residues 342-550 (ELLQHDRQLK…DGELSIEMEK (209 aa)) are b. The interval 551-624 (VLKMMPDNNN…FANDVASLMK (74 aa)) is c.

Belongs to the heat shock protein 90 family. In terms of assembly, homodimer.

It localises to the cytoplasm. Functionally, molecular chaperone. Has ATPase activity. In Clostridium acetobutylicum (strain ATCC 824 / DSM 792 / JCM 1419 / IAM 19013 / LMG 5710 / NBRC 13948 / NRRL B-527 / VKM B-1787 / 2291 / W), this protein is Chaperone protein HtpG.